Reading from the N-terminus, the 101-residue chain is NADH-quinone oxidoreductase subunit K (101 aa).

Helical transmembrane passes span 4-24 (LPHY…GIFV), 30-50 (IVIL…LVAF), and 61-81 (IFAM…LAIL).

The protein belongs to the complex I subunit 4L family. In terms of assembly, NDH-1 is composed of 14 different subunits. Subunits NuoA, H, J, K, L, M, N constitute the membrane sector of the complex.

Its subcellular location is the cell inner membrane. It carries out the reaction a quinone + NADH + 5 H(+)(in) = a quinol + NAD(+) + 4 H(+)(out). Functionally, NDH-1 shuttles electrons from NADH, via FMN and iron-sulfur (Fe-S) centers, to quinones in the respiratory chain. The immediate electron acceptor for the enzyme in this species is believed to be ubiquinone. Couples the redox reaction to proton translocation (for every two electrons transferred, four hydrogen ions are translocated across the cytoplasmic membrane), and thus conserves the redox energy in a proton gradient. This Caulobacter vibrioides (strain ATCC 19089 / CIP 103742 / CB 15) (Caulobacter crescentus) protein is NADH-quinone oxidoreductase subunit K.